The primary structure comprises 182 residues: Peptidyl-prolyl cis-trans isomerase H (182 aa).

The 167-residue stretch at Phe-15 to Glu-181 folds into the PPIase cyclophilin-type domain.

It belongs to the cyclophilin-type PPIase family. PPIase H subfamily.

The protein localises to the nucleus. The catalysed reaction is [protein]-peptidylproline (omega=180) = [protein]-peptidylproline (omega=0). Functionally, PPIases accelerate the folding of proteins. It catalyzes the cis-trans isomerization of proline imidic peptide bonds in oligopeptides. This is Peptidyl-prolyl cis-trans isomerase H (cyp-3) from Neurospora crassa (strain ATCC 24698 / 74-OR23-1A / CBS 708.71 / DSM 1257 / FGSC 987).